A 580-amino-acid chain; its full sequence is Glutamyl-tRNA(Gln) amidotransferase subunit B-2, chloroplastic/mitochondrial (580 aa).

Low complexity-rich tracts occupy residues 20–35 (RRDA…ATVS) and 42–59 (AVST…SAAV). Residues 20–64 (RRDATAAASTSAATVSRGRRARAVSTTTTTSSSSSSSAAVDARDA) form a disordered region.

The protein belongs to the GatB/GatE family. GatB subfamily. As to quaternary structure, subunit of the heterotrimeric GatCAB amidotransferase (AdT) complex, composed of A, B and C subunits.

The protein localises to the mitochondrion. It is found in the plastid. The protein resides in the chloroplast. It carries out the reaction L-glutamyl-tRNA(Gln) + L-glutamine + ATP + H2O = L-glutaminyl-tRNA(Gln) + L-glutamate + ADP + phosphate + H(+). Functionally, allows the formation of correctly charged Gln-tRNA(Gln) through the transamidation of misacylated Glu-tRNA(Gln) in chloroplasts and mitochondria. The reaction takes place in the presence of glutamine and ATP through an activated gamma-phospho-Glu-tRNA(Gln). This chain is Glutamyl-tRNA(Gln) amidotransferase subunit B-2, chloroplastic/mitochondrial, found in Micromonas pusilla (strain CCMP1545) (Picoplanktonic green alga).